Reading from the N-terminus, the 160-residue chain is Type IV major fimbrial protein FimA (160 aa).

The propeptide at 1-7 (MKSLQKG) is leader sequence. F8 carries the post-translational modification N-methylphenylalanine. A helical membrane pass occupies residues 8-28 (FTLIELMIVVAIIGILAAFAI). C63 and C105 are oxidised to a cystine.

Belongs to the N-Me-Phe pilin family. The pili are polar flexible filaments of about 5.4 nanometers diameter and 2.5 micrometers average length; they consist of only a single polypeptide chain arranged in a helical configuration of five subunits per turn in the assembled pilus.

The protein localises to the fimbrium. It localises to the membrane. Major component of the type IV fimbriae that plays an essential role in twitching motility, natural transformation, and protease secretion. The chain is Type IV major fimbrial protein FimA (fimA) from Dichelobacter nodosus (Bacteroides nodosus).